A 462-amino-acid polypeptide reads, in one-letter code: MELRLYNTLTRSKDTLRPLDPANVRMYVCGPTVYDHAHIGNARPVIVFDVLFRLLRRLYGEGHVKYVRNITDVDDKINARAAERGITIRDLTEETYRWFREDTAALNCLRPTVEPRATEHIAEMRTLIESLVASGHAYVAEEHVLFHVPSMPDYGRLSRRPLDEMVAGARVDVAPYKRDPMDFVLWKPSEAGIPGWPSPCGIATPGRPGWHIECSAMSWRHLGETFDIHGGGIDLVFPHHENEIAQSRCAFHTGVMAQMWMHNGFLMLEGEKMSKSLGNFVTIRELLAEWPGEVLRLAMLSTHYRQPINWTRQGLGFAAKTLDKWYRIIGEAEAETGEGNPFETEIADRLADDLNTPSVITHLHHLAEVAEHEEASSALRRRFKGAANLLGLLGDTETGWRARQKEAIALDEGVIAGLIADRLAARKAKDFKRADQIREELAAQGVVLMDNKDGTTSWEVSR.

Residue cysteine 29 coordinates Zn(2+). A 'HIGH' region motif is present at residues 31 to 41 (PTVYDHAHIGN). Positions 214, 239, and 243 each coordinate Zn(2+). Positions 272–276 (KMSKS) match the 'KMSKS' region motif. Lysine 275 lines the ATP pocket.

The protein belongs to the class-I aminoacyl-tRNA synthetase family. Monomer. Zn(2+) serves as cofactor.

It is found in the cytoplasm. It carries out the reaction tRNA(Cys) + L-cysteine + ATP = L-cysteinyl-tRNA(Cys) + AMP + diphosphate. The chain is Cysteine--tRNA ligase from Xanthobacter autotrophicus (strain ATCC BAA-1158 / Py2).